The chain runs to 714 residues: Hormonally up-regulated neu tumor-associated kinase (714 aa).

Positions 1-15 (MPAAAGDGLLGEPAA) are enriched in low complexity. The tract at residues 1–26 (MPAAAGDGLLGEPAAPGGGGGAEDAA) is disordered. A Protein kinase domain is found at 62–320 (LIGSRKLGEG…IQQALANRWL (259 aa)). Residues 68–76 (LGEGSFAKV) and Lys91 contribute to the ATP site. Residue Asp186 is the Proton acceptor of the active site. The segment covering 437–461 (KKPKEQEKRGDFLHRPFSKKLDKNL) has biased composition (basic and acidic residues). Disordered regions lie at residues 437–471 (KKPKEQEKRGDFLHRPFSKKLDKNLPSHKQPSGSL), 518–552 (MEFIPVPPPRTPRIVKKPEPHQPGPGSTGIPHKED), and 590–660 (ARRN…VKSR). Over residues 599 to 611 (LSPGLPSGSMSPL) the composition is skewed to low complexity. Residues 623–635 (AHEDKNSPPKEEG) show a composition bias toward basic and acidic residues.

Belongs to the protein kinase superfamily. CAMK Ser/Thr protein kinase family. SNF1 subfamily.

It catalyses the reaction L-seryl-[protein] + ATP = O-phospho-L-seryl-[protein] + ADP + H(+). The catalysed reaction is L-threonyl-[protein] + ATP = O-phospho-L-threonyl-[protein] + ADP + H(+). In Pan troglodytes (Chimpanzee), this protein is Hormonally up-regulated neu tumor-associated kinase (HUNK).